The chain runs to 542 residues: GPI alpha-1,2-mannosyltransferase 3 (542 aa).

Positions 1-36 (MESQAADYNPASRNLHGSSGEMKLRRRKSRQYVSAQ) are disordered. 8 helical membrane passes run 52 to 72 (LVLF…TSFV), 125 to 145 (VQFL…VADI), 213 to 233 (LVAL…PLLF), 244 to 264 (HLTL…SLII), 304 to 324 (GFPV…FLAP), 327 to 347 (LHIL…LGHK), 351 to 371 (FIYP…AHLK), and 376 to 396 (AALS…GLVH). A glycan (N-linked (GlcNAc...) asparagine) is linked at N480.

This sequence belongs to the glycosyltransferase 22 family. PIGB subfamily.

Its subcellular location is the endoplasmic reticulum membrane. The protein operates within glycolipid biosynthesis; glycosylphosphatidylinositol-anchor biosynthesis. Its function is as follows. Alpha-1,2-mannosyltransferase that catalyzes the transfer of the third mannose, via an alpha-1,2 bond, from a dolichol-phosphate-mannose (Dol-P-Man) to an alpha-D-Man-(1-&gt;6)-2-PEtn-alpha-D-Man-(1-&gt;4)-alpha-D-GlcN-(1-&gt;6)-(1-radyl,2-acyl-sn-glycero-3-phospho)-2-acyl-inositol intermediate to generate an alpha-D-Man-(1-&gt;2)-alpha-D-Man-(1-&gt;6)-2-PEtn-alpha-D-Man-(1-&gt;4)-alpha-D-GlcN-(1-&gt;6)-(1-radyl,2-acyl-sn-glycero-3-phospho)-2-acyl-inositol (also termed H6) and participates in the nineth step of the glycosylphosphatidylinositol-anchor biosynthesis. May also add the third mannose to an alpha-D-Man-(1-&gt;6)-alpha-D-Man-(1-&gt;4)-alpha-D-GlcN-(1-&gt;6)-(1-radyl,2-acyl-sn-glycero-3-phospho)-2-acyl-inositol (also termed H3) intermediate generating an alpha-D-Man-(1-&gt;2)-alpha-D-Man-(1-&gt;6)-alpha-D-Man-(1-&gt;4)-alpha-D-GlcN-(1-&gt;6)-(1-radyl,2-acyl-sn-glycero-3-phospho)-2-acyl-inositol (also termed H4). In Mus musculus (Mouse), this protein is GPI alpha-1,2-mannosyltransferase 3.